Here is a 481-residue protein sequence, read N- to C-terminus: Glycogen synthase (481 aa).

Lysine 16 is an ADP-alpha-D-glucose binding site.

Belongs to the glycosyltransferase 1 family. Bacterial/plant glycogen synthase subfamily.

It carries out the reaction [(1-&gt;4)-alpha-D-glucosyl](n) + ADP-alpha-D-glucose = [(1-&gt;4)-alpha-D-glucosyl](n+1) + ADP + H(+). It functions in the pathway glycan biosynthesis; glycogen biosynthesis. Its function is as follows. Synthesizes alpha-1,4-glucan chains using ADP-glucose. The sequence is that of Glycogen synthase from Lacticaseibacillus casei (strain BL23) (Lactobacillus casei).